Consider the following 233-residue polypeptide: Small ribosomal subunit protein uS2 (233 aa).

It belongs to the universal ribosomal protein uS2 family.

The sequence is that of Small ribosomal subunit protein uS2 from Clostridium perfringens (strain ATCC 13124 / DSM 756 / JCM 1290 / NCIMB 6125 / NCTC 8237 / Type A).